A 53-amino-acid polypeptide reads, in one-letter code: Large ribosomal subunit protein bL33A (53 aa).

This sequence belongs to the bacterial ribosomal protein bL33 family.

In Mycoplasmoides gallisepticum (strain R(low / passage 15 / clone 2)) (Mycoplasma gallisepticum), this protein is Large ribosomal subunit protein bL33A.